We begin with the raw amino-acid sequence, 305 residues long: Myb-like transcriptional regulator basR (305 aa).

3 consecutive Myb-like domains span residues 5-59, 60-110, and 111-162; these read RRRW…YNRF, TGGL…HHCL, and NPEL…TILS. The tract at residues 175 to 215 is disordered; sequence PCCDSPSPSKSSRRPPSTPTSTPQVPGSRQGSSYDPYDYGS. Positions 198-207 are enriched in polar residues; the sequence is QVPGSRQGSS.

The protein localises to the nucleus. In terms of biological role, transcription regulator that acts as a central regulatory node for the integration of external bacterial signals leading to the regulation of secondary metabolite gene clusters such as orsellinic, lecanoric acid, cichorine, 2,4-dihydroxy-3-methyl-6-(2-oxopropyl)benzaldehyde (dba), emericellamide or microperfuranone clusters. This Emericella nidulans (strain FGSC A4 / ATCC 38163 / CBS 112.46 / NRRL 194 / M139) (Aspergillus nidulans) protein is Myb-like transcriptional regulator basR.